The primary structure comprises 282 residues: Reaction center protein L chain (282 aa).

Residues 2 to 32 (ALLSFERKYRVPGGTLVGGNLFDFWVGPFYV) are Cytoplasmic-facing. A helical transmembrane segment spans residues 33–56 (GFFGVATFFFAALGIILIAWSAVL). Topologically, residues 57-83 (QGTWNPQLISVYPPALEYGLGGAPLAK) are periplasmic. The chain crosses the membrane as a helical span at residues 84–112 (GGLWQIITICATGAFVSWALREVEICRKL). Residues 113–116 (GIGY) are Cytoplasmic-facing. A helical transmembrane segment spans residues 117–139 (HIPFAFAFAILAYLTLVLFRPVM). Topologically, residues 140 to 171 (MGAWGYAFPYGIWTHLDWVSNTGYTYGNFHYN) are periplasmic. 2 residues coordinate (7R,8Z)-bacteriochlorophyll b: histidine 154 and histidine 174. Residues 172–199 (PAHMIAISFFFTNALALALHGALVLSAA) traverse the membrane as a helical segment. Fe cation is bound at residue histidine 191. Over 200–225 (NPEKGKEMRTPDHEDTFFRDLVGYSI) the chain is Cytoplasmic. Residue phenylalanine 217 participates in a ubiquinone binding. Residues 226 to 251 (GTLGIHRLGLLLSLSAVFFSALCMII) traverse the membrane as a helical segment. Histidine 231 contributes to the Fe cation binding site. The Periplasmic portion of the chain corresponds to 252 to 282 (TGTIWFDQWVDWWQWWVKLPWWANIPGGING).

Belongs to the reaction center PufL/M/PsbA/D family. Reaction center is composed of four bacteriochlorophylls, two bacteriopheophytins, two ubiquinones, one iron, and three highly hydrophobic polypeptide chains (designated L, M, and H).

Its subcellular location is the cellular chromatophore membrane. The reaction center is a membrane-bound complex that mediates the initial photochemical event in the electron transfer process of photosynthesis. In Cereibacter sphaeroides (strain ATCC 17023 / DSM 158 / JCM 6121 / CCUG 31486 / LMG 2827 / NBRC 12203 / NCIMB 8253 / ATH 2.4.1.) (Rhodobacter sphaeroides), this protein is Reaction center protein L chain (pufL).